The sequence spans 545 residues: Membrane protein insertase YidC (545 aa).

6 consecutive transmembrane segments (helical) span residues 10–30 (AVYLSLFFIGIFMLLDDFLFS), 319–339 (LLYFLQVPMQLIMQIFYNVIP), 341–361 (WGLSIMFLTIVVRILIFPLTF), 407–427 (IGGCFPILLQLPVFFALYGLV), 467–487 (ILPFIMMITQLLSTIVSSNVS), and 502–522 (MPIMFFFILYDMPSGLLIYWI).

Belongs to the OXA1/ALB3/YidC family. Type 1 subfamily. Interacts with the Sec translocase complex via SecD. Specifically interacts with transmembrane segments of nascent integral membrane proteins during membrane integration.

The protein localises to the cell inner membrane. Required for the insertion and/or proper folding and/or complex formation of integral membrane proteins into the membrane. Involved in integration of membrane proteins that insert both dependently and independently of the Sec translocase complex, as well as at least some lipoproteins. Aids folding of multispanning membrane proteins. This Borrelia duttonii (strain Ly) protein is Membrane protein insertase YidC.